The sequence spans 291 residues: NAD kinase (291 aa).

D73 acts as the Proton acceptor in catalysis. Residues 73–74, 147–148, R175, D177, 188–193, A212, and Q246 each bind NAD(+); these read DG, ND, and TAYALS.

This sequence belongs to the NAD kinase family. Requires a divalent metal cation as cofactor.

It is found in the cytoplasm. It catalyses the reaction NAD(+) + ATP = ADP + NADP(+) + H(+). Involved in the regulation of the intracellular balance of NAD and NADP, and is a key enzyme in the biosynthesis of NADP. Catalyzes specifically the phosphorylation on 2'-hydroxyl of the adenosine moiety of NAD to yield NADP. The polypeptide is NAD kinase (Polaromonas naphthalenivorans (strain CJ2)).